A 336-amino-acid chain; its full sequence is HTH-type transcriptional regulator SyrM (336 aa).

The region spanning 41–98 (IDLNLLVALEALLEYRNVTHAGQHIGRSQPAMSRALGRLRGLFNDDLLVRSSTGLIPT) is the HTH lysR-type domain. The H-T-H motif DNA-binding region spans 58–77 (VTHAGQHIGRSQPAMSRALG).

Belongs to the LysR transcriptional regulatory family.

Acts in trans to stimulate nod gene expression via nodD3 and exo gene expression via SyrA. The polypeptide is HTH-type transcriptional regulator SyrM (syrM) (Rhizobium etli).